The primary structure comprises 855 residues: DNA replication helicase (855 aa).

78 to 85 is an ATP binding site; sequence GNAGSGKS.

Belongs to the herpesviridae helicase family. In terms of assembly, associates with the primase and the primase-associated factor to form the helicase-primase complex.

The protein resides in the host nucleus. In terms of biological role, component of the helicase/primase complex. Unwinds the DNA at the replication forks and generates single-stranded DNA for both leading and lagging strand synthesis. The primase synthesizes short RNA primers on the lagging strand that the polymerase elongates using dNTPs. Possesses helicase-like motifs and therefore may act as the helicase subunit of the complex. The chain is DNA replication helicase from Amazona oratrix (yellow-headed parrot).